Consider the following 336-residue polypeptide: L-Ala-D/L-amino acid epimerase (336 aa).

Substrate contacts are provided by residues Thr130 and 152-154 (KIK). Asp178, Glu204, and Asp229 together coordinate Mg(2+). Residues Lys251 and 301 to 303 (DMD) each bind substrate.

It belongs to the mandelate racemase/muconate lactonizing enzyme family. It depends on Mg(2+) as a cofactor.

Catalyzes the epimerization of D-Ala-D-Ala to D-Ala-L-Ala. Has broad substrate specificity and catalyzes the epimerization of a variety of dipeptides containing an N-terminal Ala followed by Ser, Thr, Val, Met, His, Phe or Trp (in vitro). The sequence is that of L-Ala-D/L-amino acid epimerase from Flavobacterium johnsoniae (strain ATCC 17061 / DSM 2064 / JCM 8514 / BCRC 14874 / CCUG 350202 / NBRC 14942 / NCIMB 11054 / UW101) (Cytophaga johnsonae).